The following is a 213-amino-acid chain: ATP-dependent Clp protease proteolytic subunit 1 (213 aa).

The active-site Nucleophile is the Ser108. His133 is a catalytic residue.

This sequence belongs to the peptidase S14 family. Fourteen ClpP subunits assemble into 2 heptameric rings which stack back to back to give a disk-like structure with a central cavity, resembling the structure of eukaryotic proteasomes.

It localises to the cytoplasm. It catalyses the reaction Hydrolysis of proteins to small peptides in the presence of ATP and magnesium. alpha-casein is the usual test substrate. In the absence of ATP, only oligopeptides shorter than five residues are hydrolyzed (such as succinyl-Leu-Tyr-|-NHMec, and Leu-Tyr-Leu-|-Tyr-Trp, in which cleavage of the -Tyr-|-Leu- and -Tyr-|-Trp bonds also occurs).. In terms of biological role, cleaves peptides in various proteins in a process that requires ATP hydrolysis. Has a chymotrypsin-like activity. Plays a major role in the degradation of misfolded proteins. This Frankia casuarinae (strain DSM 45818 / CECT 9043 / HFP020203 / CcI3) protein is ATP-dependent Clp protease proteolytic subunit 1.